Consider the following 343-residue polypeptide: Aldehyde reductase 2 (343 aa).

Tyr-177 is a binding site for NADP(+).

This sequence belongs to the NAD(P)-dependent epimerase/dehydratase family. Dihydroflavonol-4-reductase subfamily. In terms of assembly, monomer.

It catalyses the reaction a primary alcohol + NADP(+) = an aldehyde + NADPH + H(+). Its activity is regulated as follows. Inhibited by quercetin and diphenylhydantoin. In terms of biological role, catalyzes the asymmetric reduction of o-substituted aliphatic and aromatic aldehydes and ketones to an S-enantiomer. Reduces ethyl 4-chloro-3-oxobutanoate to ethyl (S)-4-chloro-3-hydroxybutanoate. The sequence is that of Aldehyde reductase 2 from Sporidiobolus salmonicolor (Yeast-like fungus).